The chain runs to 171 residues: Large ribosomal subunit protein uL10 (171 aa).

This sequence belongs to the universal ribosomal protein uL10 family. Part of the ribosomal stalk of the 50S ribosomal subunit. The N-terminus interacts with L11 and the large rRNA to form the base of the stalk. The C-terminus forms an elongated spine to which L12 dimers bind in a sequential fashion forming a multimeric L10(L12)X complex.

Forms part of the ribosomal stalk, playing a central role in the interaction of the ribosome with GTP-bound translation factors. The polypeptide is Large ribosomal subunit protein uL10 (Corynebacterium jeikeium (strain K411)).